The chain runs to 110 residues: Keratin, type I cytoskeletal 19 (110 aa).

Residues phenylalanine 1–arginine 8 form a head region. Serine 3 bears the Phosphoserine mark. An IF rod domain is found at phenylalanine 7–arginine 110. At arginine 8 the chain carries Omega-N-methylarginine. Residues isoleucine 9–tryptophan 42 are coil 1A. Residues tyrosine 43–lysine 45 form a linker 1 region. A coil 1B region spans residues isoleucine 46–leucine 83. The interval alanine 85–arginine 110 is coil 2. A necessary for interaction with PNN region spans residues alanine 85–arginine 110.

The protein belongs to the intermediate filament family. As to quaternary structure, heterotetramer of two type I and two type II keratins. Interacts with PNN and the actin-binding domain of DMD.

In terms of biological role, involved in the organization of myofibers. Together with KRT8, helps to link the contractile apparatus to dystrophin at the costameres of striated muscle. This Mesocricetus auratus (Golden hamster) protein is Keratin, type I cytoskeletal 19.